The primary structure comprises 92 residues: DNA-directed RNA polymerase subunit omega (92 aa).

The protein belongs to the RNA polymerase subunit omega family. In terms of assembly, the RNAP catalytic core consists of 2 alpha, 1 beta, 1 beta' and 1 omega subunit. When a sigma factor is associated with the core the holoenzyme is formed, which can initiate transcription.

It catalyses the reaction RNA(n) + a ribonucleoside 5'-triphosphate = RNA(n+1) + diphosphate. Promotes RNA polymerase assembly. Latches the N- and C-terminal regions of the beta' subunit thereby facilitating its interaction with the beta and alpha subunits. In Shewanella oneidensis (strain ATCC 700550 / JCM 31522 / CIP 106686 / LMG 19005 / NCIMB 14063 / MR-1), this protein is DNA-directed RNA polymerase subunit omega.